We begin with the raw amino-acid sequence, 287 residues long: uncharacterized protein (287 aa).

Positions proline 115–isoleucine 287 constitute an ATP-grasp domain. ATP-binding positions include lysine 145 and glutamine 178–serine 188. Residues aspartate 248, glutamate 261, and asparagine 263 each contribute to the Mg(2+) site. Mn(2+) is bound by residues aspartate 248, glutamate 261, and asparagine 263.

It belongs to the RimK family.

This is an uncharacterized protein from Mycoplasma genitalium (strain ATCC 33530 / DSM 19775 / NCTC 10195 / G37) (Mycoplasmoides genitalium).